A 382-amino-acid polypeptide reads, in one-letter code: MKALHFGAGNIGRGFIGKLLADANVELTFADVNQPLLDALNSRKSYSVRIVGDNTQVEAVSNVSAVHSGSQDAIALIAAADLVTTAVGPQILEKIAGTIAQGLVKRHEDGNTRPLNIIACENMVRGTSQLKQHVLKLLPEAHQEWVVEHVGFVDSAVDRIVPPSEAGSDDVLAVTVETFSEWIVDKTQFCGEPPAIPGMELTDNLMAFVERKLFTLNTGHAITAYLGQQARHQTIRDAILDPKVRAVVKGAMEESGAVLIKRYGFDADKHAAYINKILSRFENPHLHDDVDRVGRQPLRKLSAGDRLIKPLLGTLEYHLPHDNLIIGIAAAMHYRSEQDPQALELAELIRTLGPQATLVQISGLDADSEVVAQAVNVYNAMQ.

3 to 14 (ALHFGAGNIGRG) contacts NAD(+).

It belongs to the mannitol dehydrogenase family.

It carries out the reaction D-mannitol 1-phosphate + NAD(+) = beta-D-fructose 6-phosphate + NADH + H(+). The protein is Mannitol-1-phosphate 5-dehydrogenase of Pectobacterium atrosepticum (strain SCRI 1043 / ATCC BAA-672) (Erwinia carotovora subsp. atroseptica).